A 360-amino-acid chain; its full sequence is Phospho-N-acetylmuramoyl-pentapeptide-transferase (360 aa).

A run of 10 helical transmembrane segments spans residues 24-44 (RAVM…PWTI), 69-89 (GTPT…TLLW), 92-112 (WANP…ALGF), 133-153 (MVWQ…LAAN), 158-178 (ILIV…GFLV), 199-219 (GLAT…AYAS), 239-259 (VVIF…FNAY), 263-283 (VFMG…VAVI), 288-308 (FVLV…MLQV), and 337-357 (QVVV…LSTL).

This sequence belongs to the glycosyltransferase 4 family. MraY subfamily. It depends on Mg(2+) as a cofactor.

The protein resides in the cell inner membrane. The enzyme catalyses UDP-N-acetyl-alpha-D-muramoyl-L-alanyl-gamma-D-glutamyl-meso-2,6-diaminopimeloyl-D-alanyl-D-alanine + di-trans,octa-cis-undecaprenyl phosphate = di-trans,octa-cis-undecaprenyl diphospho-N-acetyl-alpha-D-muramoyl-L-alanyl-D-glutamyl-meso-2,6-diaminopimeloyl-D-alanyl-D-alanine + UMP. Its pathway is cell wall biogenesis; peptidoglycan biosynthesis. In terms of biological role, catalyzes the initial step of the lipid cycle reactions in the biosynthesis of the cell wall peptidoglycan: transfers peptidoglycan precursor phospho-MurNAc-pentapeptide from UDP-MurNAc-pentapeptide onto the lipid carrier undecaprenyl phosphate, yielding undecaprenyl-pyrophosphoryl-MurNAc-pentapeptide, known as lipid I. This chain is Phospho-N-acetylmuramoyl-pentapeptide-transferase, found in Neisseria meningitidis serogroup C / serotype 2a (strain ATCC 700532 / DSM 15464 / FAM18).